Consider the following 1243-residue polypeptide: MGDMTNSDFYSKNQRNESSHGGEFGCTMEELRSLMELRGTEAVVKIKETYGDTEAICRRLKTSPVEGLPGTAPDLEKRKQIFGQNFIPPKKPKTFLQLVWEALQDVTLIILEIAAIISLGLSFYHPPGEGNEGCATAQGGAEDEGEAEAGWIEGAAILLSVICVVLVTAFNDWSKEKQFRGLQSRIEQEQKFTVVRAGQVVQIPVAEIVVGDIAQVKYGDLLPADGLFIQGNDLKIDESSLTGESDQVRKSVDKDPMLLSGTHVMEGSGRMLVTAVGVNSQTGIIFTLLGAGGEEEEKKDKKGVKKGDGLQLPAADGAAASNAADSANASLVNGKMQDGNVDASQSKAKQQDGAAAMEMQPLKSAEGGDADDRKKASMHKKEKSVLQGKLTKLAVQIGKAGLVMSAITVIILVLYFTVDTFVVNKKPWLPECTPVYVQYFVKFFIIGVTVLVVAVPEGLPLAVTISLAYSVKKMMKDNNLVRHLDACETMGNATAICSDKTGTLTTNRMTVVQAYVGDVHYKEIPDPSSINTKTMELLINAIAINSAYTTKILPPEKEGALPRQVGNKTECGLLGFVLDLKQDYEPVRSQMPEEKLYKVYTFNSVRKSMSTVIKLPDESFRMYSKGASEIVLKKCCKILNGAGEPRVFRPRDRDEMVKKVIEPMACDGLRTICVAYRDFPSSPEPDWDNENDILNELTCICVVGIEDPVRPEVPEAIRKCQRAGITVRMVTGDNINTARAIAIKCGIIHPGEDFLCLEGKEFNRRIRNEKGEIEQERIDKIWPKLRVLARSSPTDKHTLVKGIIDSTHTEQRQVVAVTGDGTNDGPALKKADVGFAMGIAGTDVAKEASDIILTDDNFSSIVKAVMWGRNVYDSISKFLQFQLTVNVVAVIVAFTGACITQDSPLKAVQMLWVNLIMDTFASLALATEPPTETLLLRKPYGRNKPLISRTMMKNILGHAVYQLALIFTLLFVGEKMFQIDSGRNAPLHSPPSEHYTIIFNTFVMMQLFNEINARKIHGERNVFDGIFRNPIFCTIVLGTFAIQIVIVQFGGKPFSCSPLQLDQWMWCIFIGLGELVWGQVIATIPTSRLKFLKEAGRLTQKEEIPEEELNEDVEEIDHAERELRRGQILWFRGLNRIQTQIRVVKAFRSSLYEGLEKPESRTSIHNFMAHPEFRIEDSQPHIPLIDDTDLEEDAALKQNSSPPSSLNKNNSAIDSGINLTTDTSKSATSSSPGSPIHSLETSL.

Residues 1–13 are compositionally biased toward polar residues; sequence MGDMTNSDFYSKN. The interval 1–24 is disordered; sequence MGDMTNSDFYSKNQRNESSHGGEF. Residues 1-94 lie on the Cytoplasmic side of the membrane; it reads MGDMTNSDFY…NFIPPKKPKT (94 aa). A Phosphoserine modification is found at Ser18. A helical membrane pass occupies residues 95–115; it reads FLQLVWEALQDVTLIILEIAA. The Extracellular portion of the chain corresponds to 116-152; that stretch reads IISLGLSFYHPPGEGNEGCATAQGGAEDEGEAEAGWI. A helical membrane pass occupies residues 153 to 173; it reads EGAAILLSVICVVLVTAFNDW. The Cytoplasmic portion of the chain corresponds to 174–390; that stretch reads SKEKQFRGLQ…KEKSVLQGKL (217 aa). A disordered region spans residues 334–381; it reads GKMQDGNVDASQSKAKQQDGAAAMEMQPLKSAEGGDADDRKKASMHKK. Residues 391-410 traverse the membrane as a helical segment; that stretch reads TKLAVQIGKAGLVMSAITVI. Topologically, residues 411–443 are extracellular; the sequence is ILVLYFTVDTFVVNKKPWLPECTPVYVQYFVKF. A helical membrane pass occupies residues 444 to 461; sequence FIIGVTVLVVAVPEGLPL. Residues 462–875 are Cytoplasmic-facing; that stretch reads AVTISLAYSV…MWGRNVYDSI (414 aa). The active-site 4-aspartylphosphate intermediate is Asp499. Asp820 and Asp824 together coordinate Mg(2+). Residues 876–895 form a helical membrane-spanning segment; the sequence is SKFLQFQLTVNVVAVIVAFT. Residues 896 to 905 lie on the Extracellular side of the membrane; that stretch reads GACITQDSPL. The helical transmembrane segment at 906–926 threads the bilayer; that stretch reads KAVQMLWVNLIMDTFASLALA. At 927-946 the chain is on the cytoplasmic side; it reads TEPPTETLLLRKPYGRNKPL. Residues 947 to 969 form a helical membrane-spanning segment; the sequence is ISRTMMKNILGHAVYQLALIFTL. The Extracellular segment spans residues 970–987; that stretch reads LFVGEKMFQIDSGRNAPL. Residues 988–1009 traverse the membrane as a helical segment; sequence HSPPSEHYTIIFNTFVMMQLFN. Residues 1010–1028 are Cytoplasmic-facing; that stretch reads EINARKIHGERNVFDGIFR. The helical transmembrane segment at 1029–1050 threads the bilayer; the sequence is NPIFCTIVLGTFAIQIVIVQFG. Over 1051–1060 the chain is Extracellular; that stretch reads GKPFSCSPLQ. A helical transmembrane segment spans residues 1061–1082; sequence LDQWMWCIFIGLGELVWGQVIA. The Cytoplasmic segment spans residues 1083 to 1243; that stretch reads TIPTSRLKFL…SPIHSLETSL (161 aa). Phosphoserine is present on residues Glu1120, Arg1132, and Leu1134. The tract at residues 1123-1140 is calmodulin-binding subdomain A; sequence LRRGQILWFRGLNRIQTQ. Phosphothreonine; by PKC is present on Thr1139. Residues 1141-1150 are calmodulin-binding subdomain B; the sequence is IRVVKAFRSS. A phosphoserine mark is found at Ala1146, Leu1151, Ser1163, His1165, Asp1177, and Ser1178. Position 1188 is a phosphothreonine (Thr1188). The interval 1194–1243 is disordered; the sequence is AALKQNSSPPSSLNKNNSAIDSGINLTTDTSKSATSSSPGSPIHSLETSL. Low complexity-rich tracts occupy residues 1196–1211 and 1220–1234; these read LKQN…KNNS and TTDT…SPGS. Phosphoserine; by PKA is present on Ser1201. At Ser1211 the chain carries Phosphoserine.

This sequence belongs to the cation transport ATPase (P-type) (TC 3.A.3) family. Type IIB subfamily. Interacts with PDZD11. In terms of tissue distribution, mainly expressed in brain cortex. Found in low levels in skeletal muscle, heart muscle, stomach, liver, kidney and lung. Isoforms containing segment B are found in brain cortex and at low levels in other tissues. Isoforms containing segments X and W are found at low levels in all tissues. Isoforms containing segment A and segment Z are found at low levels in skeletal muscle and heart muscle.

The protein resides in the cell membrane. The protein localises to the synapse. Its subcellular location is the apical cell membrane. It is found in the basolateral cell membrane. The catalysed reaction is Ca(2+)(in) + ATP + H2O = Ca(2+)(out) + ADP + phosphate + H(+). Its activity is regulated as follows. Up-regulated by calmodulin which increases the affinity of the pump for Ca(2+) ions. ATP-driven Ca(2+) ion pump involved in the maintenance of basal intracellular Ca(2+) levels in specialized cells of cerebellar circuit and vestibular and cochlear systems. Uses ATP as an energy source to transport cytosolic Ca(2+) ions across the plasma membrane to the extracellular compartment. Has fast activation and Ca(2+) clearance rate suited to control fast neuronal Ca(2+) dynamics. At parallel fiber to Purkinje neuron synapse, mediates presynaptic Ca(2+) efflux in response to climbing fiber-induced Ca(2+) rise. Provides for fast return of Ca(2+) concentrations back to their resting levels, ultimately contributing to long-term depression induction and motor learning. Plays an essential role in hearing and balance. In cochlear hair cells, shuttles Ca(2+) ions from stereocilia to the endolymph and dissipates Ca(2+) transients generated by the opening of the mechanoelectrical transduction channels. Regulates Ca(2+) levels in the vestibular system, where it contributes to the formation of otoconia. In non-excitable cells, regulates Ca(2+) signaling through spatial control of Ca(2+) ions extrusion and dissipation of Ca(2+) transients generated by store-operated channels. In lactating mammary gland, allows for the high content of Ca(2+) ions in the milk. The sequence is that of Plasma membrane calcium-transporting ATPase 2 from Homo sapiens (Human).